A 337-amino-acid chain; its full sequence is uncharacterized protein (337 aa).

Residues 248–276 are a coiled coil; that stretch reads NELKAETTIQVLREQLRQEKKLKEQVLSL. A disordered region spans residues 285–337; the sequence is GGRGEEFGKPDETPSSASVGDDNFPSSTNHTFEARRRPSSLSSGGALKPSKIL. A compositionally biased stretch (basic and acidic residues) spans 287-296; it reads RGEEFGKPDE. Positions 297–315 are enriched in polar residues; it reads TPSSASVGDDNFPSSTNHT.

This is an uncharacterized protein from Invertebrate iridescent virus 3 (IIV-3).